We begin with the raw amino-acid sequence, 122 residues long: Large ribosomal subunit protein uL18 (122 aa).

The protein belongs to the universal ribosomal protein uL18 family. In terms of assembly, part of the 50S ribosomal subunit; part of the 5S rRNA/L5/L18/L25 subcomplex. Contacts the 5S and 23S rRNAs.

Functionally, this is one of the proteins that bind and probably mediate the attachment of the 5S RNA into the large ribosomal subunit, where it forms part of the central protuberance. The chain is Large ribosomal subunit protein uL18 from Thermotoga petrophila (strain ATCC BAA-488 / DSM 13995 / JCM 10881 / RKU-1).